Reading from the N-terminus, the 221-residue chain is Thiamine-phosphate synthase (221 aa).

4-amino-2-methyl-5-(diphosphooxymethyl)pyrimidine is bound by residues 44 to 48 (QFREK) and Asn-79. Residues Asp-80 and Asp-99 each contribute to the Mg(2+) site. 4-amino-2-methyl-5-(diphosphooxymethyl)pyrimidine is bound at residue Ser-117. 143 to 145 (TSS) is a 2-[(2R,5Z)-2-carboxy-4-methylthiazol-5(2H)-ylidene]ethyl phosphate binding site. Residue Lys-146 coordinates 4-amino-2-methyl-5-(diphosphooxymethyl)pyrimidine. Residues Gly-175 and 195–196 (IS) each bind 2-[(2R,5Z)-2-carboxy-4-methylthiazol-5(2H)-ylidene]ethyl phosphate.

Belongs to the thiamine-phosphate synthase family. Mg(2+) serves as cofactor.

It carries out the reaction 2-[(2R,5Z)-2-carboxy-4-methylthiazol-5(2H)-ylidene]ethyl phosphate + 4-amino-2-methyl-5-(diphosphooxymethyl)pyrimidine + 2 H(+) = thiamine phosphate + CO2 + diphosphate. The enzyme catalyses 2-(2-carboxy-4-methylthiazol-5-yl)ethyl phosphate + 4-amino-2-methyl-5-(diphosphooxymethyl)pyrimidine + 2 H(+) = thiamine phosphate + CO2 + diphosphate. The catalysed reaction is 4-methyl-5-(2-phosphooxyethyl)-thiazole + 4-amino-2-methyl-5-(diphosphooxymethyl)pyrimidine + H(+) = thiamine phosphate + diphosphate. Its pathway is cofactor biosynthesis; thiamine diphosphate biosynthesis; thiamine phosphate from 4-amino-2-methyl-5-diphosphomethylpyrimidine and 4-methyl-5-(2-phosphoethyl)-thiazole: step 1/1. In terms of biological role, condenses 4-methyl-5-(beta-hydroxyethyl)thiazole monophosphate (THZ-P) and 2-methyl-4-amino-5-hydroxymethyl pyrimidine pyrophosphate (HMP-PP) to form thiamine monophosphate (TMP). The polypeptide is Thiamine-phosphate synthase (Geobacillus kaustophilus (strain HTA426)).